A 381-amino-acid chain; its full sequence is Phthiodiolone/phenolphthiodiolone dimycocerosates ketoreductase (381 aa).

Belongs to the mer family. Phthiodiolone/phenolphthiodiolone dimycocerosates ketoreductase subfamily.

Functionally, catalyzes the reduction of the keto moiety of phthiodiolone dimycocerosates (DIM B) and glycosylated phenolphthiodiolone dimycocerosates to form the intermediate compounds phthiotriol and glycosylated phenolphthiotriol dimycocerosates during phthiocerol dimycocerosates (DIM A) and glycosylated phenolphthiocerol dimycocerosates (PGL) biosynthesis. The polypeptide is Phthiodiolone/phenolphthiodiolone dimycocerosates ketoreductase (Mycobacterium bovis (strain ATCC BAA-935 / AF2122/97)).